The chain runs to 737 residues: Catalase-peroxidase (737 aa).

The segment at residues 89–219 (WHSAGTYRVF…LAASHMGLIY (131 aa)) is a cross-link (tryptophyl-tyrosyl-methioninium (Trp-Tyr) (with M-245)). The active-site Proton acceptor is the H90. The tryptophyl-tyrosyl-methioninium (Tyr-Met) (with W-89) cross-link spans 219–245 (YVNPEGPNGNPDPKAAARDIRVTFGRM). H260 lines the heme b pocket.

This sequence belongs to the peroxidase family. Peroxidase/catalase subfamily. As to quaternary structure, homodimer or homotetramer. Requires heme b as cofactor. Post-translationally, formation of the three residue Trp-Tyr-Met cross-link is important for the catalase, but not the peroxidase activity of the enzyme.

It localises to the cytoplasm. It catalyses the reaction H2O2 + AH2 = A + 2 H2O. It carries out the reaction 2 H2O2 = O2 + 2 H2O. In terms of biological role, bifunctional enzyme with both catalase and broad-spectrum peroxidase activity. This chain is Catalase-peroxidase, found in Aspergillus terreus (strain NIH 2624 / FGSC A1156).